The primary structure comprises 238 residues: MRPSKRRPDQLRSVQITRHYTRHAEGSVLIECGDTRIICTASVDEKVPLFLRGKGQGWLTAEYGMLPRSTNERMQREAAKGKQSGRTMEIQRLIGRALRSVMDLTKLGERTIQVDCDVIQADGGTRTASITGAFVAVHDAIGTLLRKQAIEATPITGHVAAVSVGVYEGVPMLDLDYLEDSRCDTDMNIVMTDDLGLVEMQGTAEGMPFSRNDLDMMLDLAQQGIRELIAAQKNALNR.

Phosphate-binding positions include Arg-86 and 124 to 126 (GTR).

Belongs to the RNase PH family. Homohexameric ring arranged as a trimer of dimers.

It catalyses the reaction tRNA(n+1) + phosphate = tRNA(n) + a ribonucleoside 5'-diphosphate. In terms of biological role, phosphorolytic 3'-5' exoribonuclease that plays an important role in tRNA 3'-end maturation. Removes nucleotide residues following the 3'-CCA terminus of tRNAs; can also add nucleotides to the ends of RNA molecules by using nucleoside diphosphates as substrates, but this may not be physiologically important. Probably plays a role in initiation of 16S rRNA degradation (leading to ribosome degradation) during starvation. This Nitrosospira multiformis (strain ATCC 25196 / NCIMB 11849 / C 71) protein is Ribonuclease PH.